Reading from the N-terminus, the 66-residue chain is Toxin Aah6 (66 aa).

The LCN-type CS-alpha/beta domain occupies 2–65; sequence RDGYVVKNGT…LYGDDGTYCS (64 aa). N-linked (GlcNAc...) asparagine glycosylation is present at Asn-9. 4 disulfide bridges follow: Cys-13–Cys-64, Cys-17–Cys-40, Cys-26–Cys-45, and Cys-30–Cys-47.

Belongs to the long (4 C-C) scorpion toxin superfamily. Sodium channel inhibitor family. Beta subfamily. In terms of processing, N-glycans are core-fucosylated, heterogeneous and short which could be the result of extensive trimming. As to expression, expressed by the venom gland.

It is found in the secreted. Beta toxins bind voltage-independently at site-4 of sodium channels and shift the voltage of activation toward more negative potentials thereby affecting sodium channel activation and promoting spontaneous and repetitive firing. This toxin is active only on insects. This toxin has very low anti-insect activity. This Androctonus australis (Sahara scorpion) protein is Toxin Aah6.